The following is a 439-amino-acid chain: MSANWKTTGKTTGELSFEISQDEIKKSLDKAFGRVKKSLRVPGFRKGHVSRVIFNQYYGEEALYEDALNFALPEAYSAAVKETGIKAVGQPQIVPVSMGKNKAWEMKAIVTVEPEVELGQYTEIEVPKQNTRVYQKDIDAELTKRQEQNAEMVLKNDKAENGDTVTIDYVGTVDGVEFDGGSAQNYSLELGSNTFIPGFEDQLVGHGAGEEVDVVVTFPEDYGAKDLAGKEAHFATKIHEVKAKQLPELDDEFAKDVDDSVETLDELKEKIKAELKSEKEEAAKAAIQEAAITTAVKNATVEEIPDVMIQEDVDNQLNQYLGDMQRQGIDPQTYFKLTNTTEDQLRSQLSANAAERVKTNLVLEAIVAKEGFEASKEEIDAEIKDLADNYNMSEKAVRNALSDEMLAHDINVRKAMDLITDSAKQVAKAKLEEGSEEDK.

The PPIase FKBP-type domain occupies 162 to 247 (GDTVTIDYVG…IHEVKAKQLP (86 aa)).

Belongs to the FKBP-type PPIase family. Tig subfamily.

Its subcellular location is the cytoplasm. The enzyme catalyses [protein]-peptidylproline (omega=180) = [protein]-peptidylproline (omega=0). Its function is as follows. Involved in protein export. Acts as a chaperone by maintaining the newly synthesized protein in an open conformation. Functions as a peptidyl-prolyl cis-trans isomerase. The polypeptide is Trigger factor (Lactobacillus delbrueckii subsp. bulgaricus (strain ATCC 11842 / DSM 20081 / BCRC 10696 / JCM 1002 / NBRC 13953 / NCIMB 11778 / NCTC 12712 / WDCM 00102 / Lb 14)).